The following is a 196-amino-acid chain: Guanylate kinase (196 aa).

The Guanylate kinase-like domain maps to Gly8–Ala191. An ATP-binding site is contributed by Gly15 to Gly22.

This sequence belongs to the guanylate kinase family.

The protein localises to the cytoplasm. It catalyses the reaction GMP + ATP = GDP + ADP. Essential for recycling GMP and indirectly, cGMP. In Bifidobacterium longum (strain NCC 2705), this protein is Guanylate kinase.